The chain runs to 198 residues: ATP-dependent Clp protease proteolytic subunit 2 (198 aa).

Catalysis depends on Ser-94, which acts as the Nucleophile. His-119 is an active-site residue.

The protein belongs to the peptidase S14 family. Fourteen ClpP subunits assemble into 2 heptameric rings which stack back to back to give a disk-like structure with a central cavity, resembling the structure of eukaryotic proteasomes.

It localises to the cytoplasm. The enzyme catalyses Hydrolysis of proteins to small peptides in the presence of ATP and magnesium. alpha-casein is the usual test substrate. In the absence of ATP, only oligopeptides shorter than five residues are hydrolyzed (such as succinyl-Leu-Tyr-|-NHMec, and Leu-Tyr-Leu-|-Tyr-Trp, in which cleavage of the -Tyr-|-Leu- and -Tyr-|-Trp bonds also occurs).. Functionally, cleaves peptides in various proteins in a process that requires ATP hydrolysis. Has a chymotrypsin-like activity. Plays a major role in the degradation of misfolded proteins. This chain is ATP-dependent Clp protease proteolytic subunit 2, found in Borreliella burgdorferi (strain ATCC 35210 / DSM 4680 / CIP 102532 / B31) (Borrelia burgdorferi).